We begin with the raw amino-acid sequence, 279 residues long: DegV domain-containing protein lin1977 (279 aa).

The 275-residue stretch at 4–278 folds into the DegV domain; it reads IKIITDSTAG…TGAFAFMYYT (275 aa). Serine 62 and serine 94 together coordinate hexadecanoate.

In terms of biological role, may bind long-chain fatty acids, such as palmitate, and may play a role in lipid transport or fatty acid metabolism. This is DegV domain-containing protein lin1977 from Listeria innocua serovar 6a (strain ATCC BAA-680 / CLIP 11262).